A 364-amino-acid polypeptide reads, in one-letter code: Membrane-bound lytic murein transglycosylase C (364 aa).

A signal peptide spans Met-1–Ser-19. The N-palmitoyl cysteine moiety is linked to residue Cys-20. Cys-20 carries S-diacylglycerol cysteine lipidation.

The protein belongs to the transglycosylase Slt family.

The protein resides in the cell outer membrane. It carries out the reaction Exolytic cleavage of the (1-&gt;4)-beta-glycosidic linkage between N-acetylmuramic acid (MurNAc) and N-acetylglucosamine (GlcNAc) residues in peptidoglycan, from either the reducing or the non-reducing ends of the peptidoglycan chains, with concomitant formation of a 1,6-anhydrobond in the MurNAc residue.. Functionally, murein-degrading enzyme. May play a role in recycling of muropeptides during cell elongation and/or cell division. The polypeptide is Membrane-bound lytic murein transglycosylase C (Glaesserella parasuis serovar 5 (strain SH0165) (Haemophilus parasuis)).